The chain runs to 101 residues: Small ribosomal subunit protein uS14 (101 aa).

This sequence belongs to the universal ribosomal protein uS14 family. As to quaternary structure, part of the 30S ribosomal subunit. Contacts proteins S3 and S10.

Functionally, binds 16S rRNA, required for the assembly of 30S particles and may also be responsible for determining the conformation of the 16S rRNA at the A site. In Serratia proteamaculans (strain 568), this protein is Small ribosomal subunit protein uS14.